Reading from the N-terminus, the 109-residue chain is NADH-quinone oxidoreductase subunit K (109 aa).

The next 3 helical transmembrane spans lie at 12–32 (LNHYLILSSLVFTIGMLGLFM), 40–60 (ILMSIELMLLAVNINFVAFSV), and 72–92 (IIILTIAAAETSIGLAILLIY).

This sequence belongs to the complex I subunit 4L family. NDH-1 is composed of 14 different subunits. Subunits NuoA, H, J, K, L, M, N constitute the membrane sector of the complex.

The protein localises to the cell inner membrane. It carries out the reaction a quinone + NADH + 5 H(+)(in) = a quinol + NAD(+) + 4 H(+)(out). NDH-1 shuttles electrons from NADH, via FMN and iron-sulfur (Fe-S) centers, to quinones in the respiratory chain. The immediate electron acceptor for the enzyme in this species is believed to be ubiquinone. Couples the redox reaction to proton translocation (for every two electrons transferred, four hydrogen ions are translocated across the cytoplasmic membrane), and thus conserves the redox energy in a proton gradient. This Rickettsia bellii (strain RML369-C) protein is NADH-quinone oxidoreductase subunit K.